Consider the following 400-residue polypeptide: Cysteine desulfurase 1 (400 aa).

Pyridoxal 5'-phosphate is bound by residues 71 to 72 (GT), Asn-150, Gln-178, and 198 to 200 (SGH). Position 201 is an N6-(pyridoxal phosphate)lysine (Lys-201). Thr-236 provides a ligand contact to pyridoxal 5'-phosphate. Cys-324 acts as the Cysteine persulfide intermediate in catalysis. Residue Cys-324 participates in [2Fe-2S] cluster binding.

Belongs to the class-V pyridoxal-phosphate-dependent aminotransferase family. NifS/IscS subfamily. Homodimer. Pyridoxal 5'-phosphate serves as cofactor.

It catalyses the reaction (sulfur carrier)-H + L-cysteine = (sulfur carrier)-SH + L-alanine. Catalyzes the removal of elemental sulfur atoms from cysteine to produce alanine. Seems to participate in the biosynthesis of the nitrogenase metalloclusters by providing the inorganic sulfur required for the Fe-S core formation. In Trichormus variabilis (strain ATCC 29413 / PCC 7937) (Anabaena variabilis), this protein is Cysteine desulfurase 1.